We begin with the raw amino-acid sequence, 557 residues long: Arginine--tRNA ligase (557 aa).

The 'HIGH' region motif lies at 132–142; sequence ANPTGNLHLGH.

The protein belongs to the class-I aminoacyl-tRNA synthetase family. As to quaternary structure, monomer.

The protein resides in the cytoplasm. The catalysed reaction is tRNA(Arg) + L-arginine + ATP = L-arginyl-tRNA(Arg) + AMP + diphosphate. This Geobacillus thermodenitrificans (strain NG80-2) protein is Arginine--tRNA ligase.